A 1431-amino-acid chain; its full sequence is 1-phosphatidylinositol 4,5-bisphosphate phosphodiesterase beta egl-8 (1431 aa).

Positions 340–491 (MDMDQPLCHY…LRKKILIKNK (152 aa)) constitute a PI-PLC X-box domain. Residue His-355 is part of the active site. Ca(2+)-binding residues include Asn-356, Glu-385, and Asp-387. His-403 is an active-site residue. Glu-437 provides a ligand contact to Ca(2+). Substrate-binding residues include Lys-489 and Lys-491. 2 disordered regions span residues 510-601 (KLDE…MVPD) and 632-692 (RRQS…SGPS). Residues 543-556 (EEVDDDTSDDDDDP) show a composition bias toward acidic residues. Low complexity-rich tracts occupy residues 572–586 (NTTS…ARSS), 652–661 (SSSSPATPSI), and 668–692 (ATSS…SGPS). Positions 758 to 874 (LSSLVNYTHP…GYLLKPDFLR (117 aa)) constitute a PI-PLC Y-box domain. Substrate is bound by residues Ser-787 and Arg-814. The region spanning 877-1002 (DRTFDPFSES…SLRSDTNQSF (126 aa)) is the C2 domain. 3 disordered regions span residues 1072–1119 (QPPR…VAVD), 1150–1176 (DLRK…SSIA), and 1188–1216 (NNRR…SASG). Polar residues predominate over residues 1074–1113 (PRQNGSSADLLANNGQTGSARGDQTSSMASSTIRSPNEQP). Residues 1135–1166 (KAFAKLLKRFQKELDDLRKKHQKQRDSIQKQQ) adopt a coiled-coil conformation. Positions 1150-1162 (DLRKKHQKQRDSI) are enriched in basic and acidic residues. Residues 1191–1200 (RSTKKEKGSR) are compositionally biased toward basic residues. Over residues 1204–1216 (TASVSSGCGSASG) the composition is skewed to low complexity. 2 coiled-coil regions span residues 1288 to 1318 (DEEE…KNQM) and 1368 to 1402 (EKNL…QLEQ).

The cofactor is Ca(2+). As to expression, expressed in most or all neurons with high expression in the head and tail ganglia and low expression in the motor neurons of the ventral cord. Expressed in the intestine (at protein level). In males, expressed in vas deferens, spicule protractor muscles, diagonal muscles and a male-specific neuron.

It is found in the perikaryon. It localises to the cell projection. The protein resides in the axon. The protein localises to the synapse. Its subcellular location is the cell junction. It is found in the adherens junction. It carries out the reaction a 1,2-diacyl-sn-glycero-3-phospho-(1D-myo-inositol-4,5-bisphosphate) + H2O = 1D-myo-inositol 1,4,5-trisphosphate + a 1,2-diacyl-sn-glycerol + H(+). Mediates the production of the second messenger molecules diacylglycerol (DAG) and inositol 1,4,5-trisphosphate (IP3) which plays an important role in the regulation of intracellular signaling cascades. Required in the nervous system to modulate neuronal activity. Facilitates synaptic transmission at neuromuscular junctions by regulating the release of acetylcholine from the motor neurons and thus affecting locomotion. Plays a role in efficient egg laying and defecation. Involved in axon regeneration after injury. Plays a role in male mating behavior by regulating spicule insertion and sperm transfer. By triggering Ca(2+) transient via IP3-mediated activation of IPR3 receptor itr-1 in ASH sensory neurons, regulates avoidance behavior in response to nose touch. By activating tpa-1 via DAG production, required for the expression of antimicrobial peptide nlp-29 in response to fungal infection. During embryogenesis, may play a role in epidermal morphogenesis together with plc-1. The polypeptide is 1-phosphatidylinositol 4,5-bisphosphate phosphodiesterase beta egl-8 (Caenorhabditis elegans).